Reading from the N-terminus, the 25-residue chain is Caerin-1.9 (25 aa).

Residue leucine 25 is modified to Leucine amide.

The protein belongs to the frog skin active peptide (FSAP) family. Caerin subfamily. In terms of tissue distribution, expressed by the skin dorsal glands.

Its subcellular location is the secreted. Its function is as follows. Antimicrobial peptide. Adopts an alpha helical conformation which can disrupt bacterial membranes. Strongly inhibits the formation of NO by neuronal nitric oxide synthase (nNOS) at micromolar concentrations. Acts by a non-competitive mechanism, probably by binding to calcium/calmodulin and as a consequence blocking calmodulin attachment to nNOS. The sequence is that of Caerin-1.9 from Ranoidea chloris (Red-eyed tree frog).